The primary structure comprises 319 residues: 4-hydroxy-3-methylbut-2-enyl diphosphate reductase (319 aa).

A [4Fe-4S] cluster-binding site is contributed by Cys15. The (2E)-4-hydroxy-3-methylbut-2-enyl diphosphate site is built by His44 and His77. The dimethylallyl diphosphate site is built by His44 and His77. 2 residues coordinate isopentenyl diphosphate: His44 and His77. Cys99 lines the [4Fe-4S] cluster pocket. His127 is a binding site for (2E)-4-hydroxy-3-methylbut-2-enyl diphosphate. His127 contributes to the dimethylallyl diphosphate binding site. His127 lines the isopentenyl diphosphate pocket. Catalysis depends on Glu129, which acts as the Proton donor. Thr172 lines the (2E)-4-hydroxy-3-methylbut-2-enyl diphosphate pocket. [4Fe-4S] cluster is bound at residue Cys202. The (2E)-4-hydroxy-3-methylbut-2-enyl diphosphate site is built by Ser230, Ser231, Asn232, and Ser274. Dimethylallyl diphosphate-binding residues include Ser230, Ser231, Asn232, and Ser274. Ser230, Ser231, Asn232, and Ser274 together coordinate isopentenyl diphosphate.

The protein belongs to the IspH family. [4Fe-4S] cluster is required as a cofactor.

It catalyses the reaction isopentenyl diphosphate + 2 oxidized [2Fe-2S]-[ferredoxin] + H2O = (2E)-4-hydroxy-3-methylbut-2-enyl diphosphate + 2 reduced [2Fe-2S]-[ferredoxin] + 2 H(+). The enzyme catalyses dimethylallyl diphosphate + 2 oxidized [2Fe-2S]-[ferredoxin] + H2O = (2E)-4-hydroxy-3-methylbut-2-enyl diphosphate + 2 reduced [2Fe-2S]-[ferredoxin] + 2 H(+). It participates in isoprenoid biosynthesis; dimethylallyl diphosphate biosynthesis; dimethylallyl diphosphate from (2E)-4-hydroxy-3-methylbutenyl diphosphate: step 1/1. It functions in the pathway isoprenoid biosynthesis; isopentenyl diphosphate biosynthesis via DXP pathway; isopentenyl diphosphate from 1-deoxy-D-xylulose 5-phosphate: step 6/6. Its function is as follows. Catalyzes the conversion of 1-hydroxy-2-methyl-2-(E)-butenyl 4-diphosphate (HMBPP) into a mixture of isopentenyl diphosphate (IPP) and dimethylallyl diphosphate (DMAPP). Acts in the terminal step of the DOXP/MEP pathway for isoprenoid precursor biosynthesis. This is 4-hydroxy-3-methylbut-2-enyl diphosphate reductase from Xanthomonas euvesicatoria pv. vesicatoria (strain 85-10) (Xanthomonas campestris pv. vesicatoria).